Consider the following 201-residue polypeptide: Elongation factor Ts (201 aa).

An involved in Mg(2+) ion dislocation from EF-Tu region spans residues 81-84 (TDFV).

Belongs to the EF-Ts family.

It is found in the cytoplasm. In terms of biological role, associates with the EF-Tu.GDP complex and induces the exchange of GDP to GTP. It remains bound to the aminoacyl-tRNA.EF-Tu.GTP complex up to the GTP hydrolysis stage on the ribosome. This is Elongation factor Ts from Syntrophus aciditrophicus (strain SB).